We begin with the raw amino-acid sequence, 59 residues long: uncharacterized protein (59 aa).

This is an uncharacterized protein from Caenorhabditis elegans.